Consider the following 236-residue polypeptide: 2-C-methyl-D-erythritol 4-phosphate cytidylyltransferase (236 aa).

This sequence belongs to the IspD/TarI cytidylyltransferase family. IspD subfamily.

It carries out the reaction 2-C-methyl-D-erythritol 4-phosphate + CTP + H(+) = 4-CDP-2-C-methyl-D-erythritol + diphosphate. Its pathway is isoprenoid biosynthesis; isopentenyl diphosphate biosynthesis via DXP pathway; isopentenyl diphosphate from 1-deoxy-D-xylulose 5-phosphate: step 2/6. Catalyzes the formation of 4-diphosphocytidyl-2-C-methyl-D-erythritol from CTP and 2-C-methyl-D-erythritol 4-phosphate (MEP). The sequence is that of 2-C-methyl-D-erythritol 4-phosphate cytidylyltransferase from Pseudomonas syringae pv. tomato (strain ATCC BAA-871 / DC3000).